We begin with the raw amino-acid sequence, 113 residues long: Hydrogenase maturation factor HypA (113 aa).

Position 2 (His2) interacts with Ni(2+). Zn(2+) contacts are provided by Cys73, Cys76, Cys89, and Cys92.

The protein belongs to the HypA/HybF family.

In terms of biological role, involved in the maturation of [NiFe] hydrogenases. Required for nickel insertion into the metal center of the hydrogenase. The polypeptide is Hydrogenase maturation factor HypA (Aeromonas salmonicida (strain A449)).